We begin with the raw amino-acid sequence, 621 residues long: MNGATPSSAAAPAPVPDWRQFCELHAQVAAVDFAHKFCRFLRDNPTYDTPDAGTSFSRHFAANFLAVFSEEVRRVLGSAADTMEPEPAVTSVTSALKTATYGHSRSSEDVSAHAATKARVRKGFSLRNMSLCVVDGVRDLWHRRSSPEPDGGATPKAAEPASEPRDKWTRRLRLARTLAAKVELVDIQREGALRFMVADDAASGPGGTAQWQKCRLLLRRAVAGERFRLEFFVPPKASRPKVSIPLSAIIEVRTTMPLEMPEKDNTFVLKVENGAEYILETIDSLQKHSWVADIQGCVDPGDSEEDTGLSCARGGCLASRVASCSCELLTDADMPRPPETTTAVGAVVTAPHGRARDTVGESLAHVPLETFLQTLESSGGVSENNNPGDEGAELDTDAEAELELSDYPWFHGTLSRVKAAQLVLAGGPRSHGLFVIRQSETRPGECVLTFNFQGKAKHLRLSLNGHGQCHVQHLWFQSVFDMLRHFHTHPIPLESGGSADITLRSYVRAQGPPPDPGPAPNTAAPVPACWTEPAGQHYFSSLATATCPPASPSNGAGASSSSGSSSSATSLPPRPAEGPLSAHSRSNSTEHLLDAASGATEEPTEATLGRARAVENQYSFY.

At Y47 the chain carries Phosphotyrosine. A Phosphoserine modification is found at S130. The interval 143-166 is disordered; it reads RRSSPEPDGGATPKAAEPASEPRD. The 114-residue stretch at 186–299 folds into the PH domain; sequence DIQREGALRF…WVADIQGCVD (114 aa). S303 carries the post-translational modification Phosphoserine. The region spanning 409 to 507 is the SH2 domain; it reads WFHGTLSRVK…SADITLRSYV (99 aa). Disordered stretches follow at residues 507-528 and 549-611; these read VRAQ…PVPA and PASP…LGRA. Positions 552 to 571 are enriched in low complexity; the sequence is PSNGAGASSSSGSSSSATSL. S597 bears the Phosphoserine mark. Phosphotyrosine is present on Y618.

Belongs to the SH2B adapter family. Homodimer. Interacts with KIT/c-KIT, SHC1, EPOR, PDGFR, VAV1 and VAV3. Interacts (via N-terminal region) with SHC1. Interacts (via the phosphorylated C-terminus) with GRB2. Interacts (via its SH2 domain) with EPOR, INSR and KIT. Interacts with GRB2 after B-cell antigen receptor stimulation. Interacts (via PH domain) with VAV3. Interacts with NTRK1, NTRK2 and NTRK3 (phosphorylated); after stimulation of the receptor by its extracellular ligand and subsequent autophosphorylation of the receptor. Binds INSR, GRB2, ASB6 and CAP. Insulin stimulation leads to dissociation of CAP. Binds CBS only when SH2B2/APS has become phosphorylated. INSR binding does not depend on the phosphorylation of SH2B2/APS. In terms of processing, tyrosine phosphorylated by JAK2, KIT and other kinases activated by B-cell receptor in response to stimulation with cytokines, IL3, IL5, PDGF, IGF1, IGF2, CSF2/GM-CSF and cross-linking of the B-cell receptor complex. Strongly expressed in brain; also expressed in spleen, kidney and skeletal muscle, and at low levels in small intestine and bone marrow. Strongly expressed in B-cell lines, but not T-cell lines. Also expressed in myeloid and fibroblast cell lines.

It is found in the cytoplasm. The protein localises to the cell membrane. In terms of biological role, adapter protein for several members of the tyrosine kinase receptor family. Involved in multiple signaling pathways. May be involved in coupling from immunoreceptor to Ras signaling. Acts as a negative regulator of cytokine signaling in collaboration with CBL. Binds to EPOR and suppresses EPO-induced STAT5 activation, possibly through a masking effect on STAT5 docking sites in EPOR. Suppresses PDGF-induced mitogenesis. May induce cytoskeletal reorganization via interaction with VAV3. The protein is SH2B adapter protein 2 (Sh2b2) of Mus musculus (Mouse).